The primary structure comprises 592 residues: Aspartate--tRNA ligase (592 aa).

An L-aspartate-binding site is contributed by Glu-171. Positions 195–198 (QLFK) are aspartate. Residue Arg-217 participates in L-aspartate binding. ATP contacts are provided by residues 217 to 219 (RDE) and Gln-226. Residue His-448 coordinates L-aspartate. An ATP-binding site is contributed by Glu-482. An L-aspartate-binding site is contributed by Arg-489. 534 to 537 (GLDR) is a binding site for ATP.

The protein belongs to the class-II aminoacyl-tRNA synthetase family. Type 1 subfamily. Homodimer.

The protein resides in the cytoplasm. It carries out the reaction tRNA(Asp) + L-aspartate + ATP = L-aspartyl-tRNA(Asp) + AMP + diphosphate. Catalyzes the attachment of L-aspartate to tRNA(Asp) in a two-step reaction: L-aspartate is first activated by ATP to form Asp-AMP and then transferred to the acceptor end of tRNA(Asp). The sequence is that of Aspartate--tRNA ligase from Pseudoalteromonas translucida (strain TAC 125).